The following is a 215-amino-acid chain: Cytidylate kinase (215 aa).

ATP is bound at residue 11–19 (GPTASGKGT).

This sequence belongs to the cytidylate kinase family. Type 1 subfamily.

It is found in the cytoplasm. It catalyses the reaction CMP + ATP = CDP + ADP. The catalysed reaction is dCMP + ATP = dCDP + ADP. This Polynucleobacter necessarius subsp. necessarius (strain STIR1) protein is Cytidylate kinase.